A 229-amino-acid chain; its full sequence is Uracil-DNA glycosylase (229 aa).

Aspartate 64 functions as the Proton acceptor in the catalytic mechanism.

Belongs to the uracil-DNA glycosylase (UDG) superfamily. UNG family.

It localises to the cytoplasm. It carries out the reaction Hydrolyzes single-stranded DNA or mismatched double-stranded DNA and polynucleotides, releasing free uracil.. In terms of biological role, excises uracil residues from the DNA which can arise as a result of misincorporation of dUMP residues by DNA polymerase or due to deamination of cytosine. The protein is Uracil-DNA glycosylase of Geobacillus thermodenitrificans (strain NG80-2).